A 145-amino-acid chain; its full sequence is Large ribosomal subunit protein uL11 (145 aa).

This sequence belongs to the universal ribosomal protein uL11 family. In terms of assembly, part of the ribosomal stalk of the 50S ribosomal subunit. Interacts with L10 and the large rRNA to form the base of the stalk. L10 forms an elongated spine to which L12 dimers bind in a sequential fashion forming a multimeric L10(L12)X complex. One or more lysine residues are methylated.

Functionally, forms part of the ribosomal stalk which helps the ribosome interact with GTP-bound translation factors. In Rickettsia peacockii (strain Rustic), this protein is Large ribosomal subunit protein uL11.